Reading from the N-terminus, the 176-residue chain is Urease accessory protein UreE (176 aa).

Residues Glu-134–Arg-176 are disordered.

Belongs to the UreE family.

The protein resides in the cytoplasm. In terms of biological role, involved in urease metallocenter assembly. Binds nickel. Probably functions as a nickel donor during metallocenter assembly. The protein is Urease accessory protein UreE of Nitrosospira multiformis (strain ATCC 25196 / NCIMB 11849 / C 71).